A 278-amino-acid chain; its full sequence is Large ribosomal subunit protein uL2 (278 aa).

Positions 202 to 278 (ANINDGKAGR…IMRSRHQRKK (77 aa)) are disordered.

This sequence belongs to the universal ribosomal protein uL2 family. As to quaternary structure, part of the 50S ribosomal subunit. Forms a bridge to the 30S subunit in the 70S ribosome.

Its function is as follows. One of the primary rRNA binding proteins. Required for association of the 30S and 50S subunits to form the 70S ribosome, for tRNA binding and peptide bond formation. It has been suggested to have peptidyltransferase activity; this is somewhat controversial. Makes several contacts with the 16S rRNA in the 70S ribosome. This Rhizobium johnstonii (strain DSM 114642 / LMG 32736 / 3841) (Rhizobium leguminosarum bv. viciae) protein is Large ribosomal subunit protein uL2.